The chain runs to 248 residues: Large ribosomal subunit protein uL4 (248 aa).

Disordered regions lie at residues 48–96 and 210–248; these read GTHK…PVPR and AFSE…RTGA. A compositionally biased stretch (basic and acidic residues) spans 233 to 248; that stretch reads DATKARSSRHDDRTGA.

The protein belongs to the universal ribosomal protein uL4 family. Part of the 50S ribosomal subunit.

One of the primary rRNA binding proteins, this protein initially binds near the 5'-end of the 23S rRNA. It is important during the early stages of 50S assembly. It makes multiple contacts with different domains of the 23S rRNA in the assembled 50S subunit and ribosome. Functionally, forms part of the polypeptide exit tunnel. In Tropheryma whipplei (strain Twist) (Whipple's bacillus), this protein is Large ribosomal subunit protein uL4.